We begin with the raw amino-acid sequence, 344 residues long: Phosphoribosylformylglycinamidine cyclo-ligase (344 aa).

It belongs to the AIR synthase family.

It is found in the cytoplasm. It carries out the reaction 2-formamido-N(1)-(5-O-phospho-beta-D-ribosyl)acetamidine + ATP = 5-amino-1-(5-phospho-beta-D-ribosyl)imidazole + ADP + phosphate + H(+). Its pathway is purine metabolism; IMP biosynthesis via de novo pathway; 5-amino-1-(5-phospho-D-ribosyl)imidazole from N(2)-formyl-N(1)-(5-phospho-D-ribosyl)glycinamide: step 2/2. This is Phosphoribosylformylglycinamidine cyclo-ligase from Exiguobacterium sibiricum (strain DSM 17290 / CCUG 55495 / CIP 109462 / JCM 13490 / 255-15).